The following is a 369-amino-acid chain: Methionine import ATP-binding protein MetN 1 (369 aa).

Residues 29–265 form the ABC transporter domain; sequence IRLHGLGKRY…PRHAVTRSLL (237 aa). Residue 62–69 coordinates ATP; that stretch reads GRSGAGKS.

It belongs to the ABC transporter superfamily. Methionine importer (TC 3.A.1.24) family. The complex is composed of two ATP-binding proteins (MetN), two transmembrane proteins (MetI) and a solute-binding protein (MetQ).

Its subcellular location is the cell inner membrane. The catalysed reaction is L-methionine(out) + ATP + H2O = L-methionine(in) + ADP + phosphate + H(+). The enzyme catalyses D-methionine(out) + ATP + H2O = D-methionine(in) + ADP + phosphate + H(+). Its function is as follows. Part of the ABC transporter complex MetNIQ involved in methionine import. Responsible for energy coupling to the transport system. The polypeptide is Methionine import ATP-binding protein MetN 1 (Pseudomonas aeruginosa (strain ATCC 15692 / DSM 22644 / CIP 104116 / JCM 14847 / LMG 12228 / 1C / PRS 101 / PAO1)).